An 805-amino-acid chain; its full sequence is Leucine--tRNA ligase (805 aa).

A 'HIGH' region motif is present at residues 40–51 (PYPSGAGLHVGH). The 'KMSKS' region motif lies at 576-580 (KMSKS). Lysine 579 contacts ATP.

The protein belongs to the class-I aminoacyl-tRNA synthetase family.

Its subcellular location is the cytoplasm. The enzyme catalyses tRNA(Leu) + L-leucine + ATP = L-leucyl-tRNA(Leu) + AMP + diphosphate. The chain is Leucine--tRNA ligase from Anoxybacillus flavithermus (strain DSM 21510 / WK1).